The chain runs to 399 residues: CCA-adding enzyme (399 aa).

2 residues coordinate ATP: Gly32 and Arg35. 2 residues coordinate CTP: Gly32 and Arg35. Positions 45 and 47 each coordinate Mg(2+). The ATP site is built by Arg116, Asp159, Arg162, Arg165, and Arg168. Residues Arg116, Asp159, Arg162, Arg165, and Arg168 each contribute to the CTP site.

It belongs to the tRNA nucleotidyltransferase/poly(A) polymerase family. Bacterial CCA-adding enzyme type 3 subfamily. In terms of assembly, homodimer. The cofactor is Mg(2+).

It catalyses the reaction a tRNA precursor + 2 CTP + ATP = a tRNA with a 3' CCA end + 3 diphosphate. The catalysed reaction is a tRNA with a 3' CCA end + 2 CTP + ATP = a tRNA with a 3' CCACCA end + 3 diphosphate. Catalyzes the addition and repair of the essential 3'-terminal CCA sequence in tRNAs without using a nucleic acid template. Adds these three nucleotides in the order of C, C, and A to the tRNA nucleotide-73, using CTP and ATP as substrates and producing inorganic pyrophosphate. tRNA 3'-terminal CCA addition is required both for tRNA processing and repair. Also involved in tRNA surveillance by mediating tandem CCA addition to generate a CCACCA at the 3' terminus of unstable tRNAs. While stable tRNAs receive only 3'-terminal CCA, unstable tRNAs are marked with CCACCA and rapidly degraded. The sequence is that of CCA-adding enzyme from Streptococcus sanguinis (strain SK36).